The chain runs to 645 residues: MSVINCEEVKRDEFHTEKYYESYNIFGAHIVTEDEMRGVRFTVWAPHAKAMSVVGDFNEWDYEQHKMLQVTEEGIWSLFIPHIEEREIYKYAIETMAGDVIFKADPYAVYAEVRPNTASVVFDIKGYEWNDKNWSRKKKKKSVYKEAMTVYELHFGSWKKKEDGTLYSYREMAEELIPYVVEHQFTHIEIMPLVEHPYDRSWGYQGTGYYAATSRFGTPHDLMHFVDECHKYGIGVILDWVPGHFCKDAHGLYLFDGTPTYEYKDKDVQENPVWGTVNFDLGKREVRNFLISNALFWMRYFHIDGFRVDAVANMLYWNKEGQEQSNEHAVSFLRELNEAVFAEDEDFLMTAEDSTAWPLVTAPTYEGGLGFNYKWNMGWMNDVLKYMECAPEYRKYIHDKMTFSLLYAYSENFILPLSHDEVVHGKKSLLNKMPGDYWDKFAQLRLLYGYFFTHPGKKLLFMGGEFGQFDEWKDLEDLDWNLHDFEMHRYMHDYFKELIALYKRSKPLWQLDHSREGFQWIDANNNEQSIFSFIRQGDKQEDALVVVCNFTKATYENYKVGVPDFEYYNEVLNSDAEQYGGSGQVNKKRLKTFQEPYHNQTAHVEITIPPFGVSILRPVKTRKGSKKQDGSKTKVRSNVTSRGKR.

The Nucleophile role is filled by D309. The Proton donor role is filled by E352. The disordered stretch occupies residues 619-645; it reads VKTRKGSKKQDGSKTKVRSNVTSRGKR. The segment covering 636-645 has biased composition (polar residues); sequence RSNVTSRGKR.

Belongs to the glycosyl hydrolase 13 family. GlgB subfamily. As to quaternary structure, monomer.

It catalyses the reaction Transfers a segment of a (1-&gt;4)-alpha-D-glucan chain to a primary hydroxy group in a similar glucan chain.. It participates in glycan biosynthesis; glycogen biosynthesis. Catalyzes the formation of the alpha-1,6-glucosidic linkages in glycogen by scission of a 1,4-alpha-linked oligosaccharide from growing alpha-1,4-glucan chains and the subsequent attachment of the oligosaccharide to the alpha-1,6 position. In Bacillus anthracis (strain CDC 684 / NRRL 3495), this protein is 1,4-alpha-glucan branching enzyme GlgB.